Reading from the N-terminus, the 142-residue chain is UPF0179 protein PH1477 (142 aa).

Belongs to the UPF0179 family.

This chain is UPF0179 protein PH1477, found in Pyrococcus horikoshii (strain ATCC 700860 / DSM 12428 / JCM 9974 / NBRC 100139 / OT-3).